A 128-amino-acid chain; its full sequence is Calcitonin gene-related peptide 1 (128 aa).

The N-terminal stretch at 1–25 is a signal peptide; that stretch reads MGFLKFSPFLVVSILLLYQACSLQA. The propeptide occupies 26–80; that stretch reads VPLRSILESSPGMATLSEEEVRLLAALVQDYMQMKARELEQEEEQEAEGSSVTAQ. Residues cysteine 84 and cysteine 89 are joined by a disulfide bond. At phenylalanine 119 the chain carries Phenylalanine amide. Positions 125–128 are excised as a propeptide; it reads DLQA.

It belongs to the calcitonin family. Detected in nerve cells of cerebrum, hippocampus and pons/midbrain in newborns, and only in nerve cells of pons/midbrain in adult.

It is found in the secreted. CGRP1/CALCA is a peptide hormone that induces vasodilation mediated by the CALCRL-RAMP1 receptor complex. Dilates a variety of vessels including the coronary, cerebral and systemic vasculature. Its abundance in the CNS also points toward a neurotransmitter or neuromodulator role. It also elevates platelet cAMP. CGRP1 can also bind and activate CALCR-RAMP1 (AMYR1) receptor complex. This is Calcitonin gene-related peptide 1 from Mus musculus (Mouse).